The following is a 186-amino-acid chain: MIKIGVLALQGAVREHIRHIELSGYEGIAIKRVEQLDEIDGLILPGGESTTLRRLMDLYGFKEKLQQLDLPMFGTCAGLIVLAKNVENESGYLNKLDITVERNSFGRQVDSFESELDIKGIANDIEGVFIRAPHIAKVDNGVEILSKVGGKIVAVKQGQYLGVSFHPELTDDYRITKYFIEHMIKH.

An L-glutamine-binding site is contributed by 47 to 49 (GES). Cysteine 76 functions as the Nucleophile in the catalytic mechanism. L-glutamine is bound by residues arginine 102 and 130 to 131 (IR). Active-site charge relay system residues include histidine 166 and glutamate 168.

This sequence belongs to the glutaminase PdxT/SNO family. In terms of assembly, in the presence of PdxS, forms a dodecamer of heterodimers. Only shows activity in the heterodimer.

The catalysed reaction is aldehydo-D-ribose 5-phosphate + D-glyceraldehyde 3-phosphate + L-glutamine = pyridoxal 5'-phosphate + L-glutamate + phosphate + 3 H2O + H(+). It carries out the reaction L-glutamine + H2O = L-glutamate + NH4(+). It functions in the pathway cofactor biosynthesis; pyridoxal 5'-phosphate biosynthesis. Functionally, catalyzes the hydrolysis of glutamine to glutamate and ammonia as part of the biosynthesis of pyridoxal 5'-phosphate. The resulting ammonia molecule is channeled to the active site of PdxS. This is Pyridoxal 5'-phosphate synthase subunit PdxT from Staphylococcus epidermidis (strain ATCC 35984 / DSM 28319 / BCRC 17069 / CCUG 31568 / BM 3577 / RP62A).